A 200-amino-acid chain; its full sequence is Pyrrolidone-carboxylate peptidase (200 aa).

Catalysis depends on residues Glu79, Cys142, and His166.

The protein belongs to the peptidase C15 family. In terms of assembly, homotetramer.

It is found in the cytoplasm. It carries out the reaction Release of an N-terminal pyroglutamyl group from a polypeptide, the second amino acid generally not being Pro.. In terms of biological role, removes 5-oxoproline from various penultimate amino acid residues except L-proline. This chain is Pyrrolidone-carboxylate peptidase (pcp), found in Pyrococcus abyssi (strain GE5 / Orsay).